Here is a 347-residue protein sequence, read N- to C-terminus: Aromatic amino acid aminotransferase (347 aa).

Lysine 214 is modified (N6-(pyridoxal phosphate)lysine).

This sequence belongs to the class-II pyridoxal-phosphate-dependent aminotransferase family. Homodimer. Pyridoxal 5'-phosphate is required as a cofactor.

It catalyses the reaction an aromatic L-alpha-amino acid + 2-oxoglutarate = an aromatic oxo-acid + L-glutamate. In terms of biological role, aminotransferase that catalyzes the conversion of aromatic amino acids and 2-oxoglutarate into corresponding aromatic oxo acids and L-glutamate. The protein is Aromatic amino acid aminotransferase of Mycobacteroides abscessus (strain ATCC 19977 / DSM 44196 / CCUG 20993 / CIP 104536 / JCM 13569 / NCTC 13031 / TMC 1543 / L948) (Mycobacterium abscessus).